Here is a 241-residue protein sequence, read N- to C-terminus: Small ribosomal subunit protein uS3 (241 aa).

The region spanning 39 to 108 is the KH type-2 domain; sequence IREGVLKLLK…NLKVEVKVIE (70 aa). Residues 215–241 are disordered; it reads SQRVSEKAPMNNDRRFNNKNNNRGGRK. A compositionally biased stretch (low complexity) spans 232 to 241; that stretch reads NKNNNRGGRK.

This sequence belongs to the universal ribosomal protein uS3 family. Part of the 30S ribosomal subunit. Forms a tight complex with proteins S10 and S14.

In terms of biological role, binds the lower part of the 30S subunit head. Binds mRNA in the 70S ribosome, positioning it for translation. This is Small ribosomal subunit protein uS3 from Mesoplasma florum (strain ATCC 33453 / NBRC 100688 / NCTC 11704 / L1) (Acholeplasma florum).